The sequence spans 526 residues: GMP synthase [glutamine-hydrolyzing] (526 aa).

The Glutamine amidotransferase type-1 domain maps to Arg-9 to Arg-207. Cys-86 serves as the catalytic Nucleophile. Catalysis depends on residues His-181 and Glu-183. The 194-residue stretch at Trp-208–Arg-401 folds into the GMPS ATP-PPase domain. Position 235-241 (Ser-235–Thr-241) interacts with ATP.

In terms of assembly, homodimer.

The enzyme catalyses XMP + L-glutamine + ATP + H2O = GMP + L-glutamate + AMP + diphosphate + 2 H(+). It participates in purine metabolism; GMP biosynthesis; GMP from XMP (L-Gln route): step 1/1. Its function is as follows. Catalyzes the synthesis of GMP from XMP. This chain is GMP synthase [glutamine-hydrolyzing], found in Baumannia cicadellinicola subsp. Homalodisca coagulata.